A 379-amino-acid chain; its full sequence is Succinyl-diaminopimelate desuccinylase (379 aa).

H70 lines the Zn(2+) pocket. The active site involves D72. D103 provides a ligand contact to Zn(2+). The Proton acceptor role is filled by E137. 3 residues coordinate Zn(2+): E138, E166, and H352.

The protein belongs to the peptidase M20A family. DapE subfamily. Homodimer. The cofactor is Zn(2+). It depends on Co(2+) as a cofactor.

It carries out the reaction N-succinyl-(2S,6S)-2,6-diaminopimelate + H2O = (2S,6S)-2,6-diaminopimelate + succinate. Its pathway is amino-acid biosynthesis; L-lysine biosynthesis via DAP pathway; LL-2,6-diaminopimelate from (S)-tetrahydrodipicolinate (succinylase route): step 3/3. Its function is as follows. Catalyzes the hydrolysis of N-succinyl-L,L-diaminopimelic acid (SDAP), forming succinate and LL-2,6-diaminopimelate (DAP), an intermediate involved in the bacterial biosynthesis of lysine and meso-diaminopimelic acid, an essential component of bacterial cell walls. This chain is Succinyl-diaminopimelate desuccinylase, found in Burkholderia orbicola (strain MC0-3).